A 311-amino-acid polypeptide reads, in one-letter code: Glutaminase (311 aa).

S66, N116, E162, N169, Y193, Y245, and V263 together coordinate substrate.

The protein belongs to the glutaminase family. In terms of assembly, homotetramer.

It carries out the reaction L-glutamine + H2O = L-glutamate + NH4(+). This Rhodopseudomonas palustris (strain ATCC BAA-98 / CGA009) protein is Glutaminase.